We begin with the raw amino-acid sequence, 271 residues long: Cyclase-like protein 3 (271 aa).

The first 21 residues, 1–21, serve as a signal peptide directing secretion; the sequence is MYHLLIIITTLSFSSINITFA.

The protein belongs to the Cyclase 1 superfamily.

It localises to the secreted. Its subcellular location is the extracellular space. It is found in the extracellular matrix. The sequence is that of Cyclase-like protein 3 from Arabidopsis thaliana (Mouse-ear cress).